The chain runs to 418 residues: Arrestin domain-containing protein 4 (418 aa).

2 short sequence motifs (PPxY motif) span residues 350 to 353 and 395 to 398; these read PPNY and PPLY.

Belongs to the arrestin family. As to quaternary structure, interacts with ADRB2. Interacts (via PPxY motifs) with ITCH, NEDD4L and WWP2. Interacts with AVPR2. Identified in a complex containing at least ARRDC4, AVPR2 and HGS. Interacts with SLC11A2; controls the incorporation of SLC11A2 into extracellular vesicles through an ubiquitination-dependent mechanism. Interacts with TRIM65.

The protein localises to the early endosome. It localises to the cell membrane. The protein resides in the cytoplasmic vesicle. Functions as an adapter recruiting ubiquitin-protein ligases to their specific substrates. Plays a role in endocytosis of activated G protein-coupled receptors (GPCRs). Through an ubiquitination-dependent mechanism also plays a role in the incorporation of SLC11A2 into extracellular vesicles. May play a role in glucose uptake. Participates in innate immune response by promoting IFIH1/MDA5 activation through interaction with TRIM65. This chain is Arrestin domain-containing protein 4 (ARRDC4), found in Homo sapiens (Human).